The chain runs to 291 residues: 3-hydroxy-5-phosphonooxypentane-2,4-dione thiolase (291 aa).

Lysine 203 acts as the Schiff-base intermediate with substrate in catalysis.

The protein belongs to the DeoC/FbaB aldolase family. As to quaternary structure, homodecamer.

It is found in the cytoplasm. It carries out the reaction dihydroxyacetone phosphate + acetyl-CoA = 3-hydroxy-2,4-dioxopentyl phosphate + CoA. Involved in the degradation of phospho-AI-2, thereby terminating induction of the lsr operon and closing the AI-2 signaling cycle. Catalyzes the transfer of an acetyl moiety from 3-hydroxy-5-phosphonooxypentane-2,4-dione to CoA to form glycerone phosphate and acetyl-CoA. The protein is 3-hydroxy-5-phosphonooxypentane-2,4-dione thiolase of Photorhabdus laumondii subsp. laumondii (strain DSM 15139 / CIP 105565 / TT01) (Photorhabdus luminescens subsp. laumondii).